The primary structure comprises 65 residues: Muscarinic toxin-like protein 3 (65 aa).

4 disulfide bridges follow: Cys3-Cys24, Cys17-Cys41, Cys45-Cys57, and Cys58-Cys63.

Homodimer; non-covalently linked. In terms of tissue distribution, expressed by the venom gland.

The protein resides in the secreted. Antagonist of muscle and neuronal nicotinic acetylcholine receptors (nAChR) with highest affinity for neuronal alpha-7/CHRNA7 nAChRs. In Naja kaouthia (Monocled cobra), this protein is Muscarinic toxin-like protein 3.